The primary structure comprises 346 residues: Methylthioribose-1-phosphate isomerase (346 aa).

Substrate-binding positions include 45–47 (RGA), Arg87, and Gln194. Asp235 functions as the Proton donor in the catalytic mechanism. A substrate-binding site is contributed by 245–246 (NK).

The protein belongs to the eIF-2B alpha/beta/delta subunits family. MtnA subfamily.

It carries out the reaction 5-(methylsulfanyl)-alpha-D-ribose 1-phosphate = 5-(methylsulfanyl)-D-ribulose 1-phosphate. The protein operates within amino-acid biosynthesis; L-methionine biosynthesis via salvage pathway; L-methionine from S-methyl-5-thio-alpha-D-ribose 1-phosphate: step 1/6. Its function is as follows. Catalyzes the interconversion of methylthioribose-1-phosphate (MTR-1-P) into methylthioribulose-1-phosphate (MTRu-1-P). The protein is Methylthioribose-1-phosphate isomerase of Syntrophomonas wolfei subsp. wolfei (strain DSM 2245B / Goettingen).